The following is a 2170-amino-acid chain: ATP-binding cassette sub-family A member 7 (2170 aa).

A helical membrane pass occupies residues 22-42 (PIQLVVELLWPLFLFFILVAV). The Extracellular portion of the chain corresponds to 43–547 (RHSHPPLEHH…DVFLRVLSRS (505 aa)). C75 and C222 form a disulfide bridge. A glycan (N-linked (GlcNAc...) asparagine) is linked at N309. Transmembrane regions (helical) follow at residues 548–568 (LPLF…KAVV), 591–611 (LGWF…LVLV), 624–644 (VVVF…SFLL), 653–673 (LAAA…VLCV), 679–699 (LPLG…GFGC), and 733–753 (AFLL…EAVC). The 232-residue stretch at 805–1036 (VSIRGLKKHF…LGCGYYLTLV (232 aa)) folds into the ABC transporter 1 domain. 839 to 846 (GHNGAGKT) is a binding site for ATP. A helical membrane pass occupies residues 847-867 (TTLSILSGLFPPSSGSASILG). A disordered region spans residues 1044-1086 (THDLKGDTEDPRREKKSGSEGKTADTVLTRDGPHRSSQVPAPD). Over residues 1045-1066 (HDLKGDTEDPRREKKSGSEGKT) the composition is skewed to basic and acidic residues. A helical transmembrane segment spans residues 1257 to 1277 (IVLPALFVGLALFFTLIVPPF). At 1278–1562 (GQYPPLQLSP…TLIASSVDVL (285 aa)) the chain is on the extracellular side. Cysteines 1370 and 1384 form a disulfide. 6 consecutive transmembrane segments (helical) span residues 1563-1583 (VSIC…LVLI), 1609-1629 (FLWD…IFLA), 1646-1666 (LLLL…SFFF), 1674-1694 (VVLT…TFVL), 1708-1728 (ILKQ…LIDM), and 1754-1774 (IIGK…LITL). Residues 1818-2050 (LVLRDLTKVY…FGAGHTLTLR (233 aa)) form the ABC transporter 2 domain. 1852-1859 (GVNGAGKT) lines the ATP pocket. Residues 2129-2170 (QGEEEEGSGQETETREVSTPGLQHPKRVSRFLEDPSSVETVI) form a disordered region.

This sequence belongs to the ABC transporter superfamily. ABCA family. N-glycosylated. Expressed in blood cells. Also detected in brain and ovary tissues (at protein level). Expressed in platelet.

The protein localises to the cell membrane. It localises to the golgi apparatus membrane. Its subcellular location is the early endosome membrane. The protein resides in the cell projection. It is found in the ruffle membrane. The protein localises to the phagocytic cup. It localises to the cytoplasm. In terms of biological role, ATP-binding cassette (ABC) transporter that plays a role in lipid homeostasis and macrophage-mediated phagocytosis. Binds APOA1 and may function in apolipoprotein-mediated phospholipid efflux from cells. May also mediate cholesterol efflux. May regulate cellular ceramide homeostasis during keratinocyte differentiation. Involved in lipid raft organization and CD1D localization on thymocytes and antigen-presenting cells, which plays an important role in natural killer T-cell development and activation. Plays a role in phagocytosis of apoptotic cells by macrophages. Macrophage phagocytosis is stimulated by APOA1 or APOA2, probably by stabilization of ABCA7. Also involved in phagocytic clearance of amyloid-beta by microglia cells and macrophages. Further limits amyloid-beta production by playing a role in the regulation of amyloid-beta A4 precursor protein (APP) endocytosis and/or processing. This chain is ATP-binding cassette sub-family A member 7 (Abca7), found in Rattus norvegicus (Rat).